Here is a 494-residue protein sequence, read N- to C-terminus: Alpha-amylase-related protein (494 aa).

The first 20 residues, 1-20 (MFKFASAVILCLVAASSTQA), serve as a signal peptide directing secretion. The residue at position 21 (Gln21) is a Pyrrolidone carboxylic acid. A disulfide bridge connects residues Cys48 and Cys104. Positions 118, 169, and 178 each coordinate Ca(2+). The cysteines at positions 157 and 171 are disulfide-linked. Residue Arg206 participates in chloride binding. Catalysis depends on Asp208, which acts as the Nucleophile. Ca(2+) is bound at residue His212. Glu245 acts as the Proton donor in catalysis. Asn308 and Arg343 together coordinate chloride. Disulfide bonds link Cys376/Cys382, Cys418/Cys441, and Cys448/Cys460.

Belongs to the glycosyl hydrolase 13 family. Monomer. Requires Ca(2+) as cofactor. Chloride is required as a cofactor.

The protein resides in the secreted. The enzyme catalyses Endohydrolysis of (1-&gt;4)-alpha-D-glucosidic linkages in polysaccharides containing three or more (1-&gt;4)-alpha-linked D-glucose units.. This Drosophila ercepeae (Fruit fly) protein is Alpha-amylase-related protein (Amyrel).